We begin with the raw amino-acid sequence, 60 residues long: Light-harvesting polypeptide B-885 alpha-2 chain (60 aa).

Residues 1-16 (SAPAQWKLWLVMDPRT) lie on the Cytoplasmic side of the membrane. A helical membrane pass occupies residues 17–37 (VMIGTAAWLGVLALLIHFLLL). A bacteriochlorophyll is bound at residue H33. Over 38 to 60 (GTERFNWIDTGLKEQKATAAAQA) the chain is Periplasmic.

The protein belongs to the antenna complex alpha subunit family. In terms of assembly, the core complex is formed by different alpha and beta chains, binding bacteriochlorophyll molecules, and arranged most probably in tetrameric structures disposed around the reaction center. The non-pigmented gamma chains may constitute additional components.

Its subcellular location is the cell inner membrane. Antenna complexes are light-harvesting systems, which transfer the excitation energy to the reaction centers. The sequence is that of Light-harvesting polypeptide B-885 alpha-2 chain from Rhodocyclus tenuis (Rhodospirillum tenue).